We begin with the raw amino-acid sequence, 269 residues long: tRNA pseudouridine synthase A (269 aa).

Residue Asp51 is the Nucleophile of the active site. Residue Tyr109 participates in substrate binding.

It belongs to the tRNA pseudouridine synthase TruA family. As to quaternary structure, homodimer.

The catalysed reaction is uridine(38/39/40) in tRNA = pseudouridine(38/39/40) in tRNA. In terms of biological role, formation of pseudouridine at positions 38, 39 and 40 in the anticodon stem and loop of transfer RNAs. This chain is tRNA pseudouridine synthase A, found in Haemophilus influenzae (strain PittGG).